The following is a 254-amino-acid chain: Autophagy-related protein 5 (254 aa).

Residue Lys-102 forms a Glycyl lysine isopeptide (Lys-Gly) (interchain with G-Cter in ATG12) linkage.

The protein belongs to the ATG5 family. In terms of assembly, conjugated with ATG12. The ATG5-ATG12 conjugate forms a complex with several units of ATG16. The ATG12-ATG5 conjugate also associates with ATG3. Conjugated to ATG12; which is essential for autophagy. Conjugation with ATG12 involves ATG7 as an E1-like activating enzyme and ATG10 as an E2-like conjugating enzyme.

It is found in the preautophagosomal structure membrane. Involved in cytoplasm to vacuole transport (Cvt) and autophagic vesicle formation. Autophagy is essential for maintenance of amino acid levels and protein synthesis under nitrogen starvation. Required for selective autophagic degradation of the nucleus (nucleophagy). Also required for mitophagy, which eliminates defective or superfluous mitochondria in order to fulfill cellular energy requirements and prevent excess ROS production. Conjugation with ATG12, through a ubiquitin-like conjugating system involving ATG7 as an E1-like activating enzyme and ATG10 as an E2-like conjugating enzyme, is essential for its function. The ATG12-ATG5 conjugate acts as an E3-like enzyme which is required for lipidation of ATG8 and ATG8 association to the vesicle membranes. ATG12-ATG5 rearranges the ATG3 catalytic center and enhances its E2 activity. Autophagy is required for proper vegetative growth, asexual/sexual reproduction, and full virulence. Autophagy is particularly involved in the biosynthesis of deoxynivalenol (DON), an important virulence determinant. The chain is Autophagy-related protein 5 from Gibberella zeae (strain ATCC MYA-4620 / CBS 123657 / FGSC 9075 / NRRL 31084 / PH-1) (Wheat head blight fungus).